A 250-amino-acid polypeptide reads, in one-letter code: Probable transcriptional regulatory protein RER_29220 (250 aa).

It belongs to the TACO1 family.

The protein localises to the cytoplasm. The protein is Probable transcriptional regulatory protein RER_29220 of Rhodococcus erythropolis (strain PR4 / NBRC 100887).